We begin with the raw amino-acid sequence, 248 residues long: 2,3-bisphosphoglycerate-dependent phosphoglycerate mutase (248 aa).

Substrate is bound by residues 8–15 (RHGESTWN), 21–22 (TG), arginine 60, 87–90 (ERHY), lysine 98, and 114–115 (RR). The active-site Tele-phosphohistidine intermediate is histidine 9. The Proton donor/acceptor role is filled by glutamate 87. The tract at residues 117 to 137 (YDTPPPALEPTDPRASYDDPR) is disordered. Basic and acidic residues predominate over residues 127 to 137 (TDPRASYDDPR). 183 to 184 (GN) provides a ligand contact to substrate.

It belongs to the phosphoglycerate mutase family. BPG-dependent PGAM subfamily. Homodimer.

It carries out the reaction (2R)-2-phosphoglycerate = (2R)-3-phosphoglycerate. Its pathway is carbohydrate degradation; glycolysis; pyruvate from D-glyceraldehyde 3-phosphate: step 3/5. In terms of biological role, catalyzes the interconversion of 2-phosphoglycerate and 3-phosphoglycerate. The sequence is that of 2,3-bisphosphoglycerate-dependent phosphoglycerate mutase from Cupriavidus taiwanensis (strain DSM 17343 / BCRC 17206 / CCUG 44338 / CIP 107171 / LMG 19424 / R1) (Ralstonia taiwanensis (strain LMG 19424)).